Here is a 541-residue protein sequence, read N- to C-terminus: Synaptotagmin-1 (541 aa).

Over 1–11 (MGFFSTILGFC) the chain is Extracellular. The chain crosses the membrane as a helical span at residues 12 to 32 (GFGVGISLGLVIGYVLFVYLL). At 33 to 541 (PNDVKDPEIR…QIELEWRTAS (509 aa)) the chain is on the cytoplasmic side. In terms of domain architecture, SMP-LTD spans 67–249 (DFDRVDWINR…WPKTLVVPIL (183 aa)). The tract at residues 227–509 (QEQIKDQVAN…TLGYVDIPVV (283 aa)) is phospholipid binding. 2 consecutive C2 domains span residues 240–362 (WPKT…AFTL) and 401–521 (GFEE…NQKF). Ca(2+) is bound by residues Asp-276, Asp-282, Asp-332, and Glu-334.

This sequence belongs to the synaptotagmin family. Interacts with cabbage leaf curl virus (CaLCuV) BC1 protein and tobacco mosaic virus (TMV) MP protein. Interacts with ROSY1. Ca(2+) is required as a cofactor. In terms of tissue distribution, expressed in roots, shoots, rosette and cauline leaves, inflorescences, and siliques. In roots, expressed in vascular bundle, epidermis, the differential zone of the tips of root hairs, and the quiescent center and columella of root tips.

It localises to the cell membrane. The protein localises to the endosome membrane. Functionally, plays an important role in maintaining plasma membrane integrity during freezing and osmotic stresses. May function in membrane resealing during calcium-dependent freezing tolerance. May regulate endocytosis and endosome recycling at the plasma membrane and cell-to-cell trafficking of cabbage leaf curl virus (CaLCuV) and tobacco mosaic virus (TMV) movement proteins via plasmodesmata. This chain is Synaptotagmin-1 (SYT1), found in Arabidopsis thaliana (Mouse-ear cress).